We begin with the raw amino-acid sequence, 617 residues long: Zinc finger protein 613 (617 aa).

A KRAB domain is found at 8–78; the sequence is LTLEDVAVEF…ENEIHSQICP (71 aa). C2H2-type zinc fingers lie at residues 204-226, 232-254, 260-282, 288-310, 316-338, 344-366, 372-394, 400-422, 428-450, 456-478, 484-506, and 512-535; these read HVCTECGKAFLKKSRLIYHQRVH, HGCSICGKAFSRKSGLTEHQRNH, YECTECDKAFRWKSQLNAHQKIH, YICSDCGKGFIKKSRLINHQRVH, HGCSLCGKAFSKRSRLTEHQRTH, YECTECDKAFRWKSQLNAHQKAH, YICRDCGKGFIQKGNLIVHQRIH, YICNECGKGFIQKGNLLIHRRTH, YVCNECGKGFSQKTCLISHQRFH, FVCTECGKSCSHKSGLINHQRIH, YTCSDCGKAFRDKSCLNRHRRTH, and YGCSDCGKAFSHLSCLVYHKGMLH.

It belongs to the krueppel C2H2-type zinc-finger protein family.

It is found in the nucleus. Functionally, may be involved in transcriptional regulation. The polypeptide is Zinc finger protein 613 (ZNF613) (Homo sapiens (Human)).